The primary structure comprises 151 residues: Small ribosomal subunit protein uS15 (151 aa).

The segment covering 1 to 11 (MPHRSRHKKGR) has biased composition (basic residues). Positions 1–24 (MPHRSRHKKGRSSSVRPPHPTVPT) are disordered.

This sequence belongs to the universal ribosomal protein uS15 family. In terms of assembly, part of the 30S ribosomal subunit.

The sequence is that of Small ribosomal subunit protein uS15 from Pyrobaculum calidifontis (strain DSM 21063 / JCM 11548 / VA1).